The following is a 459-amino-acid chain: Spermidine/putrescine import ATP-binding protein PotA (459 aa).

Residues 15-334 (IELIDIVKQF…PRNIWVAKFI (320 aa)) enclose the ABC transporter domain. 47-54 (GPSGSGKT) contributes to the ATP binding site. The interval 115 to 203 (RVPKENVKKE…EEFKNKYFKR (89 aa)) is insert.

Belongs to the ABC transporter superfamily. Spermidine/putrescine importer (TC 3.A.1.11.1) family. The complex is composed of two ATP-binding proteins (PotA), two transmembrane proteins (PotB and PotC) and a solute-binding protein (PotD).

The protein localises to the cell membrane. It catalyses the reaction ATP + H2O + polyamine-[polyamine-binding protein]Side 1 = ADP + phosphate + polyamineSide 2 + [polyamine-binding protein]Side 1.. Part of the ABC transporter complex PotABCD involved in spermidine/putrescine import. Responsible for energy coupling to the transport system. This is Spermidine/putrescine import ATP-binding protein PotA from Mycoplasmopsis synoviae (strain 53) (Mycoplasma synoviae).